A 404-amino-acid polypeptide reads, in one-letter code: Argininosuccinate synthase (404 aa).

ATP contacts are provided by residues 10 to 18 (AYSGGLDTS) and A37. Residues Y89 and S94 each contribute to the L-citrulline site. ATP is bound at residue G119. 3 residues coordinate L-aspartate: T121, N125, and D126. N125 lines the L-citrulline pocket. The L-citrulline site is built by R129, S178, S187, E263, and Y275.

Belongs to the argininosuccinate synthase family. Type 1 subfamily. As to quaternary structure, homotetramer.

Its subcellular location is the cytoplasm. It carries out the reaction L-citrulline + L-aspartate + ATP = 2-(N(omega)-L-arginino)succinate + AMP + diphosphate + H(+). Its pathway is amino-acid biosynthesis; L-arginine biosynthesis; L-arginine from L-ornithine and carbamoyl phosphate: step 2/3. This is Argininosuccinate synthase from Photobacterium profundum (strain SS9).